A 2185-amino-acid polypeptide reads, in one-letter code: Genome polyprotein (2185 aa).

The N-myristoyl glycine; by host moiety is linked to residue Gly-2. At 2-1495 (GAQVSTQKTG…HVSRAFICLQ (1494 aa)) the chain is on the cytoplasmic side. Residues 568–584 (FFQGPVEDAITAAIGRV) form an amphipathic alpha-helix region. Catalysis depends on for protease 2A activity residues His-872 and Asp-890. Zn(2+) is bound by residues Cys-907 and Cys-909. Cys-961 serves as the catalytic For protease 2A activity. Positions 967 and 969 each coordinate Zn(2+). The tract at residues 1101-1173 (NNSWLKKFTE…EQSAPSQSDQ (73 aa)) is membrane-binding. Positions 1101–1239 (NNSWLKKFTE…SPGAGKSVAT (139 aa)) are oligomerization. The interval 1122-1126 (AVKIQ) is RNA-binding. Residues 1205–1361 (EKKMSNYIQF…SMYSQNGKIN (157 aa)) form the SF3 helicase domain. Zn(2+) contacts are provided by Cys-1369, Cys-1381, and Cys-1386. The C4-type; degenerate zinc finger occupies 1369–1386 (CDDECCPVNFKKCCPLVC). Residues 1413 to 1420 (EYNHRHSV) form an RNA-binding region. Residues 1424-1429 (LEALFQ) form an oligomerization region. An intramembrane segment occupies 1496-1511 (ALTTFVSVAGIIYIIY). Topologically, residues 1512 to 2185 (KLFAGFQGAY…TLRRKWLDSF (674 aa)) are cytoplasmic. Tyr-1521 carries the O-(5'-phospho-RNA)-tyrosine modification. Residues 1541 to 1719 (GPAFEFAVAM…FSAALLKHYF (179 aa)) enclose the Peptidase C3 domain. Residues His-1580, Glu-1611, and Cys-1687 each act as for protease 3C activity in the active site. Residues 1950–2066 (GHLIAFDYSG…SYPWPIDASL (117 aa)) enclose the RdRp catalytic domain. 2 residues coordinate Mg(2+): Asp-1956 and Asp-2052.

The protein belongs to the picornaviruses polyprotein family. Interacts with capsid protein VP1 and capsid protein VP3 to form heterotrimeric protomers. In terms of assembly, interacts with capsid protein VP0, and capsid protein VP3 to form heterotrimeric protomers. Five protomers subsequently associate to form pentamers which serve as building blocks for the capsid. Interacts with capsid protein VP2, capsid protein VP3 and capsid protein VP4 following cleavage of capsid protein VP0. Interacts with host CD55. Interacts with host CXADR. As to quaternary structure, interacts with capsid protein VP1 and capsid protein VP3 in the mature capsid. Interacts with capsid protein VP0 and capsid protein VP1 to form heterotrimeric protomers. Five protomers subsequently associate to form pentamers which serve as building blocks for the capsid. Interacts with capsid protein VP4 in the mature capsid. Interacts with protein 2C; this interaction may be important for virion morphogenesis. In terms of assembly, interacts with capsid protein VP1 and capsid protein VP3. As to quaternary structure, homodimer. Homohexamer; forms a hexameric ring structure with 6-fold symmetry characteristic of AAA+ ATPases. Interacts (via N-terminus) with host RTN3 (via reticulon domain); this interaction is important for viral replication. Interacts with capsid protein VP3; this interaction may be important for virion morphogenesis. In terms of assembly, interacts with protein 3CD. As to quaternary structure, homodimer. Interacts with host GBF1. Interacts (via GOLD domain) with host ACBD3 (via GOLD domain); this interaction allows the formation of a viral protein 3A/ACBD3 heterotetramer with a 2:2 stoichiometry, which will stimulate the recruitment of host PI4KB in order to synthesize PI4P at the viral RNA replication sites. Interacts with RNA-directed RNA polymerase. In terms of assembly, interacts with host TICAM1 (via C-terminus). As to quaternary structure, interacts with protein 3AB and with RNA-directed RNA polymerase. Interacts with Viral protein genome-linked and with protein 3CD. Mg(2+) is required as a cofactor. Post-translationally, specific enzymatic cleavages in vivo by the viral proteases yield processing intermediates and the mature proteins. Myristoylation is required for the formation of pentamers during virus assembly. Further assembly of 12 pentamers and a molecule of genomic RNA generates the provirion. In terms of processing, during virion maturation, immature virions are rendered infectious following cleavage of VP0 into VP4 and VP2. This maturation seems to be an autocatalytic event triggered by the presence of RNA in the capsid and it is followed by a conformational change infectious virion. Post-translationally, myristoylation is required during RNA encapsidation and formation of the mature virus particle. VPg is uridylylated by the polymerase into VPg-pUpU. This acts as a nucleotide-peptide primer for the genomic RNA replication.

It localises to the virion. It is found in the host cytoplasm. The protein resides in the host cytoplasmic vesicle membrane. Its subcellular location is the host nucleus. It carries out the reaction a ribonucleoside 5'-triphosphate + H2O = a ribonucleoside 5'-diphosphate + phosphate + H(+). The catalysed reaction is Selective cleavage of Tyr-|-Gly bond in the picornavirus polyprotein.. It catalyses the reaction RNA(n) + a ribonucleoside 5'-triphosphate = RNA(n+1) + diphosphate. The enzyme catalyses Selective cleavage of Gln-|-Gly bond in the poliovirus polyprotein. In other picornavirus reactions Glu may be substituted for Gln, and Ser or Thr for Gly.. Replication or transcription is subject to high level of random mutations by the nucleotide analog ribavirin. Functionally, forms an icosahedral capsid of pseudo T=3 symmetry with capsid proteins VP2 and VP3. The capsid is 300 Angstroms in diameter, composed of 60 copies of each capsid protein and enclosing the viral positive strand RNA genome. Capsid protein VP1 mainly forms the vertices of the capsid. Capsid protein VP1 interacts with host CD55 and CXADR to provide virion attachment to target host cells. This attachment induces virion internalization. Tyrosine kinases are probably involved in the entry process. After binding to its receptor, the capsid undergoes conformational changes. Capsid protein VP1 N-terminus (that contains an amphipathic alpha-helix) and capsid protein VP4 are externalized. Together, they shape a pore in the host membrane through which viral genome is translocated to host cell cytoplasm. Forms an icosahedral capsid of pseudo T=3 symmetry with capsid proteins VP2 and VP3. The capsid is 300 Angstroms in diameter, composed of 60 copies of each capsid protein and enclosing the viral positive strand RNA genome. In terms of biological role, lies on the inner surface of the capsid shell. After binding to the host receptor, the capsid undergoes conformational changes. Capsid protein VP4 is released, Capsid protein VP1 N-terminus is externalized, and together, they shape a pore in the host membrane through which the viral genome is translocated into the host cell cytoplasm. Its function is as follows. Component of immature procapsids, which is cleaved into capsid proteins VP4 and VP2 after maturation. Allows the capsid to remain inactive before the maturation step. Functionally, cysteine protease that cleaves viral polyprotein and specific host proteins. It is responsible for the autocatalytic cleavage between the P1 and P2 regions, which is the first cleavage occurring in the polyprotein. Also cleaves the host translation initiation factor EIF4G1, in order to shut down the capped cellular mRNA translation. Inhibits the host nucleus-cytoplasm protein and RNA trafficking by cleaving host members of the nuclear pores. Counteracts stress granule formation probably by antagonizing its assembly or promoting its dissassembly. Cleaves and inhibits host IFIH1/MDA5, thereby inhibiting the type-I IFN production and the establishment of the antiviral state. Cleaves and inhibits host MAVS, thereby inhibiting the type-I IFN production and the establishment of the antiviral state. Plays an essential role in the virus replication cycle by acting as a viroporin. Creates a pore in the host endoplasmic reticulum and as a consequence releases Ca2+ in the cytoplasm of infected cell. In turn, high levels of cytoplasmic calcium may trigger membrane trafficking and transport of viral ER-associated proteins to viroplasms, sites of viral genome replication. In terms of biological role, induces and associates with structural rearrangements of intracellular membranes. Displays RNA-binding, nucleotide binding and NTPase activities. May play a role in virion morphogenesis and viral RNA encapsidation by interacting with the capsid protein VP3. Its function is as follows. Localizes the viral replication complex to the surface of membranous vesicles. Together with protein 3CD binds the Cis-Active RNA Element (CRE) which is involved in RNA synthesis initiation. Acts as a cofactor to stimulate the activity of 3D polymerase, maybe through a nucleid acid chaperone activity. Functionally, localizes the viral replication complex to the surface of membranous vesicles. It inhibits host cell endoplasmic reticulum-to-Golgi apparatus transport and causes the disassembly of the Golgi complex, possibly through GBF1 interaction. This would result in depletion of MHC, trail receptors and IFN receptors at the host cell surface. Plays an essential role in viral RNA replication by recruiting ACBD3 and PI4KB at the viral replication sites, thereby allowing the formation of the rearranged membranous structures where viral replication takes place. Acts as a primer for viral RNA replication and remains covalently bound to viral genomic RNA. VPg is uridylylated prior to priming replication into VPg-pUpU. The oriI viral genomic sequence may act as a template for this. The VPg-pUpU is then used as primer on the genomic RNA poly(A) by the RNA-dependent RNA polymerase to replicate the viral genome. During genome replication, the VPg-RNA linkage is removed by the host TDP2, thereby accelerating replication. During the late stage of the replication cycle, host TDP2 is excluded from sites of viral RNA synthesis and encapsidation, allowing for the generation of progeny virions. In terms of biological role, involved in the viral replication complex and viral polypeptide maturation. It exhibits protease activity with a specificity and catalytic efficiency that is different from protease 3C. Protein 3CD lacks polymerase activity. Protein 3CD binds to the 5'UTR of the viral genome. Its function is as follows. Major viral protease that mediates proteolytic processing of the polyprotein. Cleaves host EIF5B, contributing to host translation shutoff. Cleaves also host PABPC1, contributing to host translation shutoff. Cleaves and inhibits host RIGI, thereby inhibiting the type-I IFN production and the establishment of the antiviral state. Cleaves and inhibits host MAVS, thereby inhibiting the type-I IFN production and the establishment of the antiviral state. Cleaves and inhibits host TICAM1/TRIF, thereby inhibiting the type-I IFN production. Cleaves host NLRP1, triggers host N-glycine-mediated degradation of the autoinhibitory NLRP1 N-terminal fragment. Cleaves host transcription factor TFEB, thereby disrupting host lysosomal functions and enhancing viral infection. Functionally, replicates the viral genomic RNA on the surface of intracellular membranes. May form linear arrays of subunits that propagate along a strong head-to-tail interaction called interface-I. Covalently attaches UMP to a tyrosine of VPg, which is used to prime RNA synthesis. The positive stranded RNA genome is first replicated at virus induced membranous vesicles, creating a dsRNA genomic replication form. This dsRNA is then used as template to synthesize positive stranded RNA genomes. ss(+)RNA genomes are either translated, replicated or encapsidated. The chain is Genome polyprotein from Coxsackievirus B3 (strain Nancy).